The primary structure comprises 291 residues: Lipoyl synthase (291 aa).

Positions 35, 40, 46, 61, 65, 68, and 273 each coordinate [4Fe-4S] cluster. In terms of domain architecture, Radical SAM core spans 47 to 262 (FGKRQATFLI…KERALTMGFE (216 aa)).

Belongs to the radical SAM superfamily. Lipoyl synthase family. [4Fe-4S] cluster serves as cofactor.

It localises to the cytoplasm. It catalyses the reaction [[Fe-S] cluster scaffold protein carrying a second [4Fe-4S](2+) cluster] + N(6)-octanoyl-L-lysyl-[protein] + 2 oxidized [2Fe-2S]-[ferredoxin] + 2 S-adenosyl-L-methionine + 4 H(+) = [[Fe-S] cluster scaffold protein] + N(6)-[(R)-dihydrolipoyl]-L-lysyl-[protein] + 4 Fe(3+) + 2 hydrogen sulfide + 2 5'-deoxyadenosine + 2 L-methionine + 2 reduced [2Fe-2S]-[ferredoxin]. It functions in the pathway protein modification; protein lipoylation via endogenous pathway; protein N(6)-(lipoyl)lysine from octanoyl-[acyl-carrier-protein]: step 2/2. In terms of biological role, catalyzes the radical-mediated insertion of two sulfur atoms into the C-6 and C-8 positions of the octanoyl moiety bound to the lipoyl domains of lipoate-dependent enzymes, thereby converting the octanoylated domains into lipoylated derivatives. The protein is Lipoyl synthase of Citrifermentans bemidjiense (strain ATCC BAA-1014 / DSM 16622 / JCM 12645 / Bem) (Geobacter bemidjiensis).